Consider the following 186-residue polypeptide: ADP-ribosylation factor-like protein 8B (186 aa).

Positions 1–19 (MLALISRLLDWFRSLFWKE) form an intramembrane region, note=Mediates targeting to membranes. Residues 29 to 35 (QYSGKTT), 71 to 75 (DIGGQ), and 130 to 133 (NKRD) each bind GTP. A Glycyl lysine isopeptide (Lys-Gly) (interchain with G-Cter in ubiquitin) cross-link involves residue K141.

The protein belongs to the small GTPase superfamily. Arf family. Interacts with tubulin. Interacts with BORCS5; recruits ARL8B to lysosomes. Interacts with VPS41; the interaction mediates the recruitment of the HOPS complex to lysosomes. Interacts (GTP-bound form) with PLEKHM2 (via RUN domain); the interaction is required to recruit the motor protein kinesin-1 on lysosomes. Interacts (GTP-bound form) with PLEKHM1 (via RUN domain); the interaction is required for PLEKHM1 localization to lysosomes and for ARL8B function in delivery and degradation of endocytic and autophagic cargo in lysosomes. PLEKHM1 and PLEKHM2 compete for interaction with ARL8B. Interacts (GTP-bound form) with RUFY1; the interaction is required for RUFY1 endosomal location. When GTP-bound, interacts with RUFY3 and RUFY4, but not with RUFY1, nor RUFY2. In terms of processing, ubiquitinated at Lys-141 by RNF167, leading to its degradation.

Its subcellular location is the late endosome membrane. It localises to the lysosome membrane. It is found in the cytoplasm. The protein resides in the cytoskeleton. The protein localises to the spindle. Its subcellular location is the cell projection. It localises to the axon. It is found in the synapse. The protein resides in the cytolytic granule membrane. The protein localises to the early endosome membrane. It carries out the reaction GTP + H2O = GDP + phosphate + H(+). Small GTPase which cycles between active GTP-bound and inactive GDP-bound states. In its active state, binds to a variety of effector proteins playing a key role in the regulation of lysosomal positioning which is important for nutrient sensing, natural killer cell-mediated cytotoxicity and antigen presentation. Along with its effectors, orchestrates lysosomal transport and fusion. Localizes specifically to lysosomal membranes and mediates anterograde lysosomal motility by recruiting PLEKHM2, which in turn recruits the motor protein kinesin-1 on lysosomes. Required for lysosomal and cytolytic granule exocytosis. Critical factor involved in NK cell-mediated cytotoxicity. Drives the polarization of cytolytic granules and microtubule-organizing centers (MTOCs) toward the immune synapse between effector NK lymphocytes and target cells. In neurons, mediates the anterograde axonal long-range transport of presynaptic lysosome-related vesicles required for presynaptic biogenesis and synaptic function. Also acts as a regulator of endosome to lysosome trafficking pathways of special significance for host defense. Recruits RUFY1 onto early endosomes regulating endosomes to trans-Golgi network proteins retrieval. Regulates cargo trafficking to lysosomes by binding to PLEKHM1 and recruiting the HOPS subunit VPS41, resulting in functional assembly of the HOPS complex on lysosomal membranes. Plays an important role in cargo delivery to lysosomes for antigen presentation and microbial killing. Directs the intersection of CD1d with lipid antigens in lysosomes, and plays a role in intersecting phagosomes with lysosomes to generate phagolysosomes that kill microbes. Involved in the process of MHC II presentation. Regulates the delivery of antigens to lysosomes and the formation of MHC II-peptide complexes through the recruitment of the HOPS complex to lysosomes allowing the fusion of late endosomes to lysosomes. May play a role in chromosome segregation. This chain is ADP-ribosylation factor-like protein 8B (ARL8B), found in Macaca fascicularis (Crab-eating macaque).